We begin with the raw amino-acid sequence, 336 residues long: Holliday junction branch migration complex subunit RuvB (336 aa).

The segment at 4-184 (ADRLISAGTT…FGIVQRLEFY (181 aa)) is large ATPase domain (RuvB-L). ATP is bound by residues Ile-23, Arg-24, Gly-65, Lys-68, Thr-69, Thr-70, 131-133 (EDY), Arg-174, Tyr-184, and Arg-221. Mg(2+) is bound at residue Thr-69. The small ATPAse domain (RuvB-S) stretch occupies residues 185–255 (QVPDLQYIVS…IAAQALDMLN (71 aa)). The tract at residues 258–336 (AEGFDYMDRK…HFGITPPEMP (79 aa)) is head domain (RuvB-H). Residues Arg-294, Arg-313, and Arg-318 each coordinate DNA.

This sequence belongs to the RuvB family. In terms of assembly, homohexamer. Forms an RuvA(8)-RuvB(12)-Holliday junction (HJ) complex. HJ DNA is sandwiched between 2 RuvA tetramers; dsDNA enters through RuvA and exits via RuvB. An RuvB hexamer assembles on each DNA strand where it exits the tetramer. Each RuvB hexamer is contacted by two RuvA subunits (via domain III) on 2 adjacent RuvB subunits; this complex drives branch migration. In the full resolvosome a probable DNA-RuvA(4)-RuvB(12)-RuvC(2) complex forms which resolves the HJ.

The protein localises to the cytoplasm. The enzyme catalyses ATP + H2O = ADP + phosphate + H(+). In terms of biological role, the RuvA-RuvB-RuvC complex processes Holliday junction (HJ) DNA during genetic recombination and DNA repair, while the RuvA-RuvB complex plays an important role in the rescue of blocked DNA replication forks via replication fork reversal (RFR). RuvA specifically binds to HJ cruciform DNA, conferring on it an open structure. The RuvB hexamer acts as an ATP-dependent pump, pulling dsDNA into and through the RuvAB complex. RuvB forms 2 homohexamers on either side of HJ DNA bound by 1 or 2 RuvA tetramers; 4 subunits per hexamer contact DNA at a time. Coordinated motions by a converter formed by DNA-disengaged RuvB subunits stimulates ATP hydrolysis and nucleotide exchange. Immobilization of the converter enables RuvB to convert the ATP-contained energy into a lever motion, pulling 2 nucleotides of DNA out of the RuvA tetramer per ATP hydrolyzed, thus driving DNA branch migration. The RuvB motors rotate together with the DNA substrate, which together with the progressing nucleotide cycle form the mechanistic basis for DNA recombination by continuous HJ branch migration. Branch migration allows RuvC to scan DNA until it finds its consensus sequence, where it cleaves and resolves cruciform DNA. The protein is Holliday junction branch migration complex subunit RuvB of Shigella sonnei (strain Ss046).